Here is a 99-residue protein sequence, read N- to C-terminus: Small integral membrane protein 14 (99 aa).

The Lumenal portion of the chain corresponds to 1–49 (MAEGGFDPCECVCSHEHAMRRLINLLRQSQSYCTDTECLRELPGPSSDS). Residues 50–70 (GISITVILMAWMVIAMLLFLL) traverse the membrane as a helical segment. Over 71–99 (RPPNLRGSSLPGKPSSPHSGQDPPAPPVD) the chain is Cytoplasmic. Residues 77–99 (GSSLPGKPSSPHSGQDPPAPPVD) form a disordered region.

Ubiquitously expressed.

It is found in the endoplasmic reticulum membrane. The protein is Small integral membrane protein 14 (Smim14) of Mus musculus (Mouse).